Reading from the N-terminus, the 257-residue chain is MSLIDIQNLTIKNTSEKSLIKGIDLKIFSQQINALIGESGAGKSLIAKALLEYLPFDLTCTYYSYQFDGENVSRLSKYYGHTIGYISQNYAESFNDHTKLGKQLTAIYRKHYKSSKEEALSKIDKALSWVNLQSKDILNKYSFQLSGGQLERVYIASVLMLEPKLIIADEPVASLDALNGNQVMDLLQHIVLEHGQTLFIITHNLSHVLKYCQYINVLKEGQIIEQGNIDHFKYEHLHPYTEQLIKYRTQLKRDYYD.

One can recognise an ABC transporter domain in the interval 4–245 (IDIQNLTIKN…HLHPYTEQLI (242 aa)). 37–44 (GESGAGKS) lines the ATP pocket.

This sequence belongs to the ABC transporter superfamily. In terms of assembly, the complex is composed of two ATP-binding proteins (NikD and NikE), two transmembrane proteins (NikB and NikC) and a solute-binding protein (NikA).

Its subcellular location is the cell membrane. The enzyme catalyses Ni(2+)(out) + ATP + H2O = Ni(2+)(in) + ADP + phosphate + H(+). Its function is as follows. Part of the ABC transporter complex NikABCDE (Opp2) involved in nickel import. Probably responsible for energy coupling to the transport system. This Staphylococcus aureus (strain bovine RF122 / ET3-1) protein is Nickel import system ATP-binding protein NikD.